The chain runs to 512 residues: Sorting nexin MVP1 (512 aa).

A disordered region spans residues M1–W24. The segment covering E13–S22 has biased composition (low complexity). Residues A130–L248 form the PX domain. Residues R174, S176, K200, and R215 each coordinate a 1,2-diacyl-sn-glycero-3-phospho-(1D-myo-inositol-3-phosphate).

Belongs to the sorting nexin family.

It localises to the cytoplasm. It is found in the membrane. Functionally, required for vacuolar protein sorting. The protein is Sorting nexin MVP1 (MVP1) of Kluyveromyces lactis (strain ATCC 8585 / CBS 2359 / DSM 70799 / NBRC 1267 / NRRL Y-1140 / WM37) (Yeast).